The primary structure comprises 342 residues: [Citrate [pro-3S]-lyase] ligase (342 aa).

Residues 1–127 (MTLILKRVQL…RAVLMENSRE (127 aa)) enclose the N-acetyltransferase domain.

It catalyses the reaction holo-[citrate lyase ACP] + acetate + ATP = acetyl-[citrate lyase ACP] + AMP + diphosphate. Acetylation of prosthetic group (2-(5''-phosphoribosyl)-3'-dephosphocoenzyme-A) of the gamma subunit of citrate lyase. This Klebsiella pneumoniae protein is [Citrate [pro-3S]-lyase] ligase (citC).